Here is a 540-residue protein sequence, read N- to C-terminus: Ribonuclease Y (540 aa).

The helical transmembrane segment at 4–24 (TILVPVAVAIVSVLVGGCAGY) threads the bilayer. One can recognise a KH domain in the interval 230–293 (TVSVVNLPSD…EIAKRALERL (64 aa)). One can recognise an HD domain in the interval 356–449 (VLSHSIEVGK…VVAADTISSA (94 aa)).

Belongs to the RNase Y family.

It localises to the cell membrane. Its function is as follows. Endoribonuclease that initiates mRNA decay. This is Ribonuclease Y from Lactobacillus johnsonii (strain CNCM I-12250 / La1 / NCC 533).